Consider the following 907-residue polypeptide: Protein translocase subunit SecA (907 aa).

Residues glutamine 87, 105 to 109, and aspartate 506 each bind ATP; that span reads GEGKT. The span at 834–850 shows a compositional bias: basic and acidic residues; the sequence is LEQQREEEAREQAEKMK. The segment at 834-907 is disordered; that stretch reads LEQQREEEAR…KYKQCHGKIE (74 aa). The span at 864–875 shows a compositional bias: low complexity; the sequence is QPQPSQQQGEQP. Cysteine 891, cysteine 893, cysteine 902, and histidine 903 together coordinate Zn(2+). A compositionally biased stretch (basic residues) spans 897–907; that stretch reads KKYKQCHGKIE.

This sequence belongs to the SecA family. In terms of assembly, monomer and homodimer. Part of the essential Sec protein translocation apparatus which comprises SecA, SecYEG and auxiliary proteins SecDF-YajC and YidC. It depends on Zn(2+) as a cofactor.

It localises to the cell inner membrane. The protein localises to the cytoplasm. The enzyme catalyses ATP + H2O + cellular proteinSide 1 = ADP + phosphate + cellular proteinSide 2.. Part of the Sec protein translocase complex. Interacts with the SecYEG preprotein conducting channel. Has a central role in coupling the hydrolysis of ATP to the transfer of proteins into and across the cell membrane, serving both as a receptor for the preprotein-SecB complex and as an ATP-driven molecular motor driving the stepwise translocation of polypeptide chains across the membrane. This is Protein translocase subunit SecA from Alcanivorax borkumensis (strain ATCC 700651 / DSM 11573 / NCIMB 13689 / SK2).